A 506-amino-acid chain; its full sequence is Galactose/methyl galactoside import ATP-binding protein MglA (506 aa).

ABC transporter domains follow at residues 14-249 (LEMS…VGRS) and 264-506 (VILE…SLHL). ATP is bound at residue 46–53 (GENGAGKS).

Belongs to the ABC transporter superfamily. Galactose/methyl galactoside importer (TC 3.A.1.2.3) family. As to quaternary structure, the complex is composed of one ATP-binding protein (MglA), two transmembrane proteins (MglC) and a solute-binding protein (MglB).

It is found in the cell inner membrane. It carries out the reaction D-galactose(out) + ATP + H2O = D-galactose(in) + ADP + phosphate + H(+). The catalysed reaction is methyl beta-D-galactoside(out) + ATP + H2O = methyl beta-D-galactoside(in) + ADP + phosphate + H(+). In terms of biological role, part of the ABC transporter complex MglABC involved in galactose/methyl galactoside import. Responsible for energy coupling to the transport system. This Shigella flexneri serotype 5b (strain 8401) protein is Galactose/methyl galactoside import ATP-binding protein MglA.